We begin with the raw amino-acid sequence, 164 residues long: Cyclic pyranopterin monophosphate synthase (164 aa).

Substrate is bound by residues 75–77 and 116–117; these read MCH and ME. The active site involves Asp131.

Belongs to the MoaC family. In terms of assembly, homohexamer; trimer of dimers.

The catalysed reaction is (8S)-3',8-cyclo-7,8-dihydroguanosine 5'-triphosphate = cyclic pyranopterin phosphate + diphosphate. Its pathway is cofactor biosynthesis; molybdopterin biosynthesis. In terms of biological role, catalyzes the conversion of (8S)-3',8-cyclo-7,8-dihydroguanosine 5'-triphosphate to cyclic pyranopterin monophosphate (cPMP). The sequence is that of Cyclic pyranopterin monophosphate synthase from Staphylococcus aureus (strain USA300).